The chain runs to 427 residues: MFVDQVKIYVKGGDGGNGMVAYRREKYVPKGGPAGGDGGKGADVVFVVEEGLRTLMDFRYQRHFKADRGQHGMSKGQHGRKSEDLIVKVPPGTIVKDEKTGEILADLVTHEQTAVIARGGRGGRGNSRFATATNPAPEIAENGEPGQERDVTLELKVLADVGLVGFPSVGKSTLLSVVSSARPKIAEYHFTTIVPNLGVVETGDNRSFVMADLPGLIEGAHSGVGLGHQFLRHIERTRVIVHVIDMSGLEGREPYEDYVTINNELKEYNMRLTERPQVVVANKMDMPDAEENLQAFKEKLGDEVKIFPISAVTKQGVRDLLFEVANLLETTPEFPMYDDVEESEASVMYKFESESNFEITRESDGTFVISGYDIEKTFKMTDFSRDESVRRFARQMRGMGIDEALRARGATDGDIVKILEYQFEFID.

The Obg domain occupies 1 to 158 (MFVDQVKIYV…RDVTLELKVL (158 aa)). Residues 159-329 (ADVGLVGFPS…LLFEVANLLE (171 aa)) enclose the OBG-type G domain. GTP contacts are provided by residues 165 to 172 (GFPSVGKS), 190 to 194 (FTTIV), 212 to 215 (DLPG), 282 to 285 (NKMD), and 310 to 312 (SAV). Mg(2+)-binding residues include serine 172 and threonine 192. The OCT domain maps to 349-427 (YKFESESNFE…ILEYQFEFID (79 aa)).

The protein belongs to the TRAFAC class OBG-HflX-like GTPase superfamily. OBG GTPase family. As to quaternary structure, monomer. It depends on Mg(2+) as a cofactor.

The protein resides in the cytoplasm. In terms of biological role, an essential GTPase which binds GTP, GDP and possibly (p)ppGpp with moderate affinity, with high nucleotide exchange rates and a fairly low GTP hydrolysis rate. Plays a role in control of the cell cycle, stress response, ribosome biogenesis and in those bacteria that undergo differentiation, in morphogenesis control. This is GTPase Obg from Bacillus mycoides (strain KBAB4) (Bacillus weihenstephanensis).